Consider the following 318-residue polypeptide: 4-diphosphocytidyl-2-C-methyl-D-erythritol kinase (318 aa).

K25 is an active-site residue. Residue 110–120 (PVAGGMAGGSA) participates in ATP binding. D152 is an active-site residue.

The protein belongs to the GHMP kinase family. IspE subfamily.

It carries out the reaction 4-CDP-2-C-methyl-D-erythritol + ATP = 4-CDP-2-C-methyl-D-erythritol 2-phosphate + ADP + H(+). The protein operates within isoprenoid biosynthesis; isopentenyl diphosphate biosynthesis via DXP pathway; isopentenyl diphosphate from 1-deoxy-D-xylulose 5-phosphate: step 3/6. Functionally, catalyzes the phosphorylation of the position 2 hydroxy group of 4-diphosphocytidyl-2C-methyl-D-erythritol. This Mycobacterium tuberculosis (strain ATCC 25177 / H37Ra) protein is 4-diphosphocytidyl-2-C-methyl-D-erythritol kinase.